The primary structure comprises 143 residues: Transcriptional regulator MraZ (143 aa).

SpoVT-AbrB domains lie at 5–47 (EYQH…PQEE) and 76–119 (ASEC…SKSE).

It belongs to the MraZ family. In terms of assembly, forms oligomers.

Its subcellular location is the cytoplasm. The protein localises to the nucleoid. In Listeria welshimeri serovar 6b (strain ATCC 35897 / DSM 20650 / CCUG 15529 / CIP 8149 / NCTC 11857 / SLCC 5334 / V8), this protein is Transcriptional regulator MraZ.